A 403-amino-acid polypeptide reads, in one-letter code: Ribosomal RNA large subunit methyltransferase I (403 aa).

Residues 9–88 enclose the PUA domain; it reads YPRLVLSKGR…ESIDIAFFTR (80 aa).

This sequence belongs to the methyltransferase superfamily. RlmI family.

It is found in the cytoplasm. The catalysed reaction is cytidine(1962) in 23S rRNA + S-adenosyl-L-methionine = 5-methylcytidine(1962) in 23S rRNA + S-adenosyl-L-homocysteine + H(+). In terms of biological role, specifically methylates the cytosine at position 1962 (m5C1962) of 23S rRNA. This is Ribosomal RNA large subunit methyltransferase I from Salmonella newport (strain SL254).